A 294-amino-acid chain; its full sequence is 4-hydroxy-tetrahydrodipicolinate synthase (294 aa).

Residue Thr-44 coordinates pyruvate. Tyr-132 functions as the Proton donor/acceptor in the catalytic mechanism. The Schiff-base intermediate with substrate role is filled by Lys-160. Ile-205 is a pyruvate binding site.

It belongs to the DapA family. Homotetramer; dimer of dimers.

It localises to the cytoplasm. The catalysed reaction is L-aspartate 4-semialdehyde + pyruvate = (2S,4S)-4-hydroxy-2,3,4,5-tetrahydrodipicolinate + H2O + H(+). It participates in amino-acid biosynthesis; L-lysine biosynthesis via DAP pathway; (S)-tetrahydrodipicolinate from L-aspartate: step 3/4. In terms of biological role, catalyzes the condensation of (S)-aspartate-beta-semialdehyde [(S)-ASA] and pyruvate to 4-hydroxy-tetrahydrodipicolinate (HTPA). In Kosmotoga olearia (strain ATCC BAA-1733 / DSM 21960 / TBF 19.5.1), this protein is 4-hydroxy-tetrahydrodipicolinate synthase.